We begin with the raw amino-acid sequence, 341 residues long: Ketol-acid reductoisomerase (NADP(+)) (341 aa).

Residues 2–181 form the KARI N-terminal Rossmann domain; it reads AKVYYNGDVN…GAARAGVLET (180 aa). NADP(+) contacts are provided by residues 25-28, arginine 48, serine 52, and 82-85; these read YGSQ and DEHQ. Histidine 107 is an active-site residue. Residue glycine 133 coordinates NADP(+). The KARI C-terminal knotted domain occupies 182-327; the sequence is TFKEETETDL…RELREMMPFV (146 aa). Aspartate 190, glutamate 194, glutamate 226, and glutamate 230 together coordinate Mg(2+). Residue serine 251 participates in substrate binding.

The protein belongs to the ketol-acid reductoisomerase family. Mg(2+) is required as a cofactor.

The enzyme catalyses (2R)-2,3-dihydroxy-3-methylbutanoate + NADP(+) = (2S)-2-acetolactate + NADPH + H(+). The catalysed reaction is (2R,3R)-2,3-dihydroxy-3-methylpentanoate + NADP(+) = (S)-2-ethyl-2-hydroxy-3-oxobutanoate + NADPH + H(+). The protein operates within amino-acid biosynthesis; L-isoleucine biosynthesis; L-isoleucine from 2-oxobutanoate: step 2/4. Its pathway is amino-acid biosynthesis; L-valine biosynthesis; L-valine from pyruvate: step 2/4. Functionally, involved in the biosynthesis of branched-chain amino acids (BCAA). Catalyzes an alkyl-migration followed by a ketol-acid reduction of (S)-2-acetolactate (S2AL) to yield (R)-2,3-dihydroxy-isovalerate. In the isomerase reaction, S2AL is rearranged via a Mg-dependent methyl migration to produce 3-hydroxy-3-methyl-2-ketobutyrate (HMKB). In the reductase reaction, this 2-ketoacid undergoes a metal-dependent reduction by NADPH to yield (R)-2,3-dihydroxy-isovalerate. This chain is Ketol-acid reductoisomerase (NADP(+)), found in Shouchella clausii (strain KSM-K16) (Alkalihalobacillus clausii).